The sequence spans 403 residues: MSHRKFSAPRHGSLGFLPRKRSSRHRGKVKSFPKDDSSKPVHLTAFLGYKAGMTHIVREVDRPGSKVNKKEVVEAVTIVETPPMVIVGIVGYVETPRGLRTFKTIFAEHISDECKRRFYKNWHKSKKKAFTKYCKKWQDEDGKKQLERDFSSMKKYCQVIRVIAHTQMRLLPLRQKKAHLMEIQVNGGTVAEKLDWARERLEQQVPVNQVFGQDEMIDVIGVTKGKGYKGVTSRWHTKKLPRKTHRGLRKVACIGAWHPARVAFSVARAGQKGYHHRTEINKKIYKIGQGYLIKDGKLIKNNASTDYDLSDKSINPLGGFVHYGEVTNDFVMLKGCVVGTKKRVLTLRKSLLVQTKRRALEKIDLKFIDTTSKFGHGRFQTVEEKKAFMGPLKKDRIAKEEGA.

Positions 1 to 38 (MSHRKFSAPRHGSLGFLPRKRSSRHRGKVKSFPKDDSS) are disordered. At Ser-13 the chain carries Phosphoserine. Basic residues predominate over residues 18–31 (PRKRSSRHRGKVKS). Lys-39 is covalently cross-linked (Glycyl lysine isopeptide (Lys-Gly) (interchain with G-Cter in SUMO2)). At Lys-136 the chain carries N6-acetyllysine. Glycyl lysine isopeptide (Lys-Gly) (interchain with G-Cter in SUMO2) cross-links involve residues Lys-224 and Lys-226. Residue His-245 is modified to Tele-methylhistidine. An N6-acetyllysine; alternate mark is found at Lys-286 and Lys-294. Lys-286 is covalently cross-linked (Glycyl lysine isopeptide (Lys-Gly) (interchain with G-Cter in SUMO2); alternate). A Glycyl lysine isopeptide (Lys-Gly) (interchain with G-Cter in SUMO1); alternate cross-link involves residue Lys-294. A Phosphoserine modification is found at Ser-304. An N6-acetyllysine; alternate modification is found at Lys-366. A Glycyl lysine isopeptide (Lys-Gly) (interchain with G-Cter in SUMO2); alternate cross-link involves residue Lys-366. Lys-373 carries the post-translational modification N6-acetyllysine. Glycyl lysine isopeptide (Lys-Gly) (interchain with G-Cter in SUMO2) cross-links involve residues Lys-386, Lys-393, and Lys-399.

The protein belongs to the universal ribosomal protein uL3 family. In terms of assembly, component of the large ribosomal subunit. Interacts with DHX33. Constitutively monomethylated at His-245 by METTL18. Methylation at His-245 regulates translation elongation by slowing ribosome traversal on tyrosine codons: slower elongation provides enough time for proper folding of synthesized proteins and prevents cellular aggregation of tyrosine-rich proteins It is not required for incorporation of RPL3 into ribosomes.

It localises to the nucleus. The protein resides in the nucleolus. It is found in the cytoplasm. Component of the large ribosomal subunit. The ribosome is a large ribonucleoprotein complex responsible for the synthesis of proteins in the cell. The sequence is that of Large ribosomal subunit protein uL3 (RPL3) from Sus scrofa (Pig).